A 502-amino-acid chain; its full sequence is Glycerol kinase (502 aa).

Thr14 lines the ADP pocket. 3 residues coordinate ATP: Thr14, Thr15, and Ser16. Position 14 (Thr14) interacts with sn-glycerol 3-phosphate. Residue Arg18 coordinates ADP. Sn-glycerol 3-phosphate-binding residues include Arg84, Glu85, and Tyr136. Glycerol-binding residues include Arg84, Glu85, and Tyr136. Position 232 is a phosphohistidine; by HPr (His232). Residue Asp246 participates in sn-glycerol 3-phosphate binding. Positions 246 and 247 each coordinate glycerol. ADP contacts are provided by Thr268 and Gly311. The ATP site is built by Thr268, Gly311, Gln315, and Gly412. ADP-binding residues include Gly412 and Asn416.

This sequence belongs to the FGGY kinase family. In terms of assembly, homotetramer and homodimer (in equilibrium). The phosphoenolpyruvate-dependent sugar phosphotransferase system (PTS), including enzyme I, and histidine-containing protein (HPr) are required for the phosphorylation, which leads to the activation of the enzyme.

The catalysed reaction is glycerol + ATP = sn-glycerol 3-phosphate + ADP + H(+). It functions in the pathway polyol metabolism; glycerol degradation via glycerol kinase pathway; sn-glycerol 3-phosphate from glycerol: step 1/1. Its activity is regulated as follows. Activated by phosphorylation and inhibited by fructose 1,6-bisphosphate (FBP). Key enzyme in the regulation of glycerol uptake and metabolism. Catalyzes the phosphorylation of glycerol to yield sn-glycerol 3-phosphate. The protein is Glycerol kinase of Streptococcus pneumoniae serotype 19F (strain G54).